We begin with the raw amino-acid sequence, 80 residues long: Exodeoxyribonuclease 7 small subunit (80 aa).

The protein belongs to the XseB family. As to quaternary structure, heterooligomer composed of large and small subunits.

It localises to the cytoplasm. It catalyses the reaction Exonucleolytic cleavage in either 5'- to 3'- or 3'- to 5'-direction to yield nucleoside 5'-phosphates.. Its function is as follows. Bidirectionally degrades single-stranded DNA into large acid-insoluble oligonucleotides, which are then degraded further into small acid-soluble oligonucleotides. The protein is Exodeoxyribonuclease 7 small subunit of Pseudomonas putida (strain W619).